Here is a 163-residue protein sequence, read N- to C-terminus: 2-C-methyl-D-erythritol 2,4-cyclodiphosphate synthase (163 aa).

The a divalent metal cation site is built by Asp-12 and His-14. 4-CDP-2-C-methyl-D-erythritol 2-phosphate-binding positions include 12–14 (DVH) and 38–39 (HS). Position 46 (His-46) interacts with a divalent metal cation. 4-CDP-2-C-methyl-D-erythritol 2-phosphate contacts are provided by residues 60–62 (DIG), 136–139 (TTSE), Phe-143, and Arg-146.

The protein belongs to the IspF family. In terms of assembly, homotrimer. A divalent metal cation is required as a cofactor.

It carries out the reaction 4-CDP-2-C-methyl-D-erythritol 2-phosphate = 2-C-methyl-D-erythritol 2,4-cyclic diphosphate + CMP. The protein operates within isoprenoid biosynthesis; isopentenyl diphosphate biosynthesis via DXP pathway; isopentenyl diphosphate from 1-deoxy-D-xylulose 5-phosphate: step 4/6. Functionally, involved in the biosynthesis of isopentenyl diphosphate (IPP) and dimethylallyl diphosphate (DMAPP), two major building blocks of isoprenoid compounds. Catalyzes the conversion of 4-diphosphocytidyl-2-C-methyl-D-erythritol 2-phosphate (CDP-ME2P) to 2-C-methyl-D-erythritol 2,4-cyclodiphosphate (ME-CPP) with a corresponding release of cytidine 5-monophosphate (CMP). The polypeptide is 2-C-methyl-D-erythritol 2,4-cyclodiphosphate synthase (Xanthomonas campestris pv. campestris (strain 8004)).